We begin with the raw amino-acid sequence, 102 residues long: Protein YcgL (102 aa).

The 85-residue stretch at 14 to 98 (MFCVIYRSSK…PPEDLLKQHL (85 aa)) folds into the YcgL domain.

This is Protein YcgL from Salmonella agona (strain SL483).